The following is a 375-amino-acid chain: Heat shock protein 42 (375 aa).

4 disordered regions span residues Thr21–Tyr59, Ser81–Cys127, Pro154–Met238, and Pro347–Asn375. A compositionally biased stretch (low complexity) spans Gly22–Val48. The span at Gly49 to Leu58 shows a compositional bias: basic residues. Acidic residues-rich tracts occupy residues Gly85–Val101 and Thr158–Gln168. The span at Glu169 to Pro197 shows a compositional bias: basic and acidic residues. 5 positions are modified to phosphoserine: Ser182, Ser213, Ser214, Ser215, and Ser223. The region spanning Arg237 to Glu356 is the sHSP domain. The segment covering Glu357–Glu367 has biased composition (acidic residues).

It belongs to the small heat shock protein (HSP20) family. As to quaternary structure, forms oligomeric complexes. Interacts with itself.

This is Heat shock protein 42 (HSP42) from Saccharomyces cerevisiae (strain ATCC 204508 / S288c) (Baker's yeast).